A 107-amino-acid polypeptide reads, in one-letter code: Anti-adapter protein IraM (107 aa).

The protein belongs to the IraM/RssC family.

The protein resides in the cytoplasm. Its function is as follows. Inhibits RpoS proteolysis by regulating RssB activity, thereby increasing the stability of the sigma stress factor RpoS during magnesium starvation. This is Anti-adapter protein IraM from Escherichia coli O7:K1 (strain IAI39 / ExPEC).